The following is a 156-amino-acid chain: Transcription antitermination protein NusB (156 aa).

It belongs to the NusB family.

Functionally, involved in transcription antitermination. Required for transcription of ribosomal RNA (rRNA) genes. Binds specifically to the boxA antiterminator sequence of the ribosomal RNA (rrn) operons. The polypeptide is Transcription antitermination protein NusB (Rickettsia bellii (strain OSU 85-389)).